Consider the following 324-residue polypeptide: Phospho-N-acetylmuramoyl-pentapeptide-transferase (324 aa).

Helical transmembrane passes span 5-25, 55-75, 81-101, 122-142, 147-167, 176-196, 203-223, 227-247, 250-270, and 302-322; these read VILFTAGLAFIITVVLSPIFI, GGLMILLSLSITTWLMSDIFF, TYMLLFVTVGYGLLGFIDDFI, LIALIFYFFFQHYSMSTVVSI, VSLDLGVAYVLLIIFMLVGGS, LDGLLAGTAAIAFGAYAVLAW, VAIFSVAVVGAVLGFLVFNAH, VFMGDTGSLALGGAIVTIAIL, LEILLVIIGGVFVIETLSVII, and VVVTFWAVGLLFAILGIYIEV.

Belongs to the glycosyltransferase 4 family. MraY subfamily. Mg(2+) serves as cofactor.

The protein localises to the cell membrane. The catalysed reaction is UDP-N-acetyl-alpha-D-muramoyl-L-alanyl-gamma-D-glutamyl-meso-2,6-diaminopimeloyl-D-alanyl-D-alanine + di-trans,octa-cis-undecaprenyl phosphate = di-trans,octa-cis-undecaprenyl diphospho-N-acetyl-alpha-D-muramoyl-L-alanyl-D-glutamyl-meso-2,6-diaminopimeloyl-D-alanyl-D-alanine + UMP. It functions in the pathway cell wall biogenesis; peptidoglycan biosynthesis. Catalyzes the initial step of the lipid cycle reactions in the biosynthesis of the cell wall peptidoglycan: transfers peptidoglycan precursor phospho-MurNAc-pentapeptide from UDP-MurNAc-pentapeptide onto the lipid carrier undecaprenyl phosphate, yielding undecaprenyl-pyrophosphoryl-MurNAc-pentapeptide, known as lipid I. This is Phospho-N-acetylmuramoyl-pentapeptide-transferase from Anoxybacillus flavithermus (strain DSM 21510 / WK1).